The following is a 210-amino-acid chain: MMNYEDAKLRGQAVAILYQIGAIKFGKHILASGEETPLYVDMRLVISSPEVLQTVATLIWRLRPSFNSSLLCGVPYTALTLATSISLKYNIPMVLRRKELQNVDPSDAIKVEGLFTPGQTCLVINDMVSSGKSIIETAVALEENGLVVREALVFLDRRKEACQPLGPQGIKVSSVFTVPTLIKALIAYGKLSSGDLTLANKISEILEIES.

5-phospho-alpha-D-ribose 1-diphosphate is bound by residues Arg-97, Lys-98, and 125 to 133 (NDMVSSGKS). Orotate-binding residues include Ser-129 and Arg-157.

It belongs to the purine/pyrimidine phosphoribosyltransferase family. PyrE subfamily. In terms of assembly, homodimer. Requires Mg(2+) as cofactor.

It catalyses the reaction orotidine 5'-phosphate + diphosphate = orotate + 5-phospho-alpha-D-ribose 1-diphosphate. The protein operates within pyrimidine metabolism; UMP biosynthesis via de novo pathway; UMP from orotate: step 1/2. Functionally, catalyzes the transfer of a ribosyl phosphate group from 5-phosphoribose 1-diphosphate to orotate, leading to the formation of orotidine monophosphate (OMP). The sequence is that of Orotate phosphoribosyltransferase from Chlamydia pneumoniae (Chlamydophila pneumoniae).